The primary structure comprises 275 residues: Polyamine aminopropyltransferase (275 aa).

A PABS domain is found at 2 to 235; sequence HLWFTEKQND…AMWSFTIGSK (234 aa). Glutamine 31 contacts S-methyl-5'-thioadenosine. Spermidine is bound by residues histidine 62 and aspartate 86. Residues glutamate 106 and 137-138 each bind S-methyl-5'-thioadenosine; that span reads DG. Catalysis depends on aspartate 155, which acts as the Proton acceptor. Spermidine is bound at residue 155–158; that stretch reads DSTD. Proline 162 contacts S-methyl-5'-thioadenosine.

It belongs to the spermidine/spermine synthase family. Homodimer or homotetramer.

It localises to the cytoplasm. The catalysed reaction is S-adenosyl 3-(methylsulfanyl)propylamine + putrescine = S-methyl-5'-thioadenosine + spermidine + H(+). It participates in amine and polyamine biosynthesis; spermidine biosynthesis; spermidine from putrescine: step 1/1. Catalyzes the irreversible transfer of a propylamine group from the amino donor S-adenosylmethioninamine (decarboxy-AdoMet) to putrescine (1,4-diaminobutane) to yield spermidine. This chain is Polyamine aminopropyltransferase, found in Desulforudis audaxviator (strain MP104C).